The primary structure comprises 51 residues: Insulin (51 aa).

3 cysteine pairs are disulfide-bonded: Cys-7–Cys-37, Cys-19–Cys-50, and Cys-36–Cys-41.

This sequence belongs to the insulin family. As to quaternary structure, heterodimer of a B chain and an A chain linked by two disulfide bonds.

It localises to the secreted. Its function is as follows. Insulin decreases blood glucose concentration. It increases cell permeability to monosaccharides, amino acids and fatty acids. It accelerates glycolysis, the pentose phosphate cycle, and glycogen synthesis in liver. This chain is Insulin (INS), found in Acomys cahirinus (Cairo spiny mouse).